Reading from the N-terminus, the 1157-residue chain is MTLQIIAGKAGTGKTTHLMDEVGEKIKKTSKTYIFIVPDQMTFQMETSFLNKQNLAGMLGTQIFSFSRLAWKILQETGGLSKTFLSQTGIEMVIRKAALDQKDKLKIFSRATSKKGFYSELAKLFKEMKQEEISVDELEKSAANLSTSVSSKVHDISLIYQKYEELLAGKFLENEDYLRLLADKIIESDYLNQTEIIIDGFTSFSKQELTVIEKLMQKCDKVTVSLTLNVPEIHKGLEDFSMFKASTEAYFALLEMAKLNKIQVEPEKILLENKRANSDSLAFLANAWGDNKYSSYEGGANDLTIHQANNRRAEMEGVAREIRQLALNGYRYRDIAILTRNIGDYDILCETVMESFDIPIFIDKKRAMAKHPFIEFIRSSIDAILFNWKYEPIFQAVKTEFFFDVAENATIMRRKADILENYVLENGIQNKWKWEKEGDWIYRKIRGLSTNVLPQTDEELATQSVINEMRNLIVEPLSTLENNITKAKTGIEFAMALYHYLEQVKAVEHLESWRQVAEENGYLELAREHEQAWSSISELLDEFVEVLGEEELDVNSFSEIITTGLDALEFSLLPPSLDQVVLADMENAKLLNMKVIFAIGMNDGVMPLRQKDKGILSDQDRDSLRVENSNLKPSAKNNIGEEDLLAYKIMSLPSDKLFLSYPAADEEGKVLSESNYLRKIKGQFKNLNESVYLTDPSLLNDKEQSSYIRSKQATLGLLTSQLQMYKRGYPLSNVWWDAYNSYFEDSKESEAAKQVLSSLYYENKTKPLQETTAKNLFGENIHASVSRMEKFFSCEFQHFAQYGLKLEERAHYKLQAVDMGEIFHGAMEWISAELKRTNRDWGNLTEEECRQMAKLAMTFLAPKIQHEILLSSKRMEYIQYKLLQIITRATTVLNEQAKSSAFRPIGLEVDFGLKGDIPPLKIPLQSDSELLLQGRIDRIDAAEQDDRTFLRIIDYKSSSHDLALTEVYYGLALQMLTYLDIVVTNAQKMIGKTAEPAGVLYFHMHNQYVQAEKELSDEAIARELQKSSKMKGLILSDPVAVSLMDTNLEKGKSSNIIPAEIKQNGELSARSRTATKAEFDKMRRFVRQKYQEAGNKILDGAVSINPYKLKEKTPCQFCGFRSFCGFDPSLASNQYRHLTNEKTETILTKMDIEGGTQ.

The UvrD-like helicase ATP-binding domain occupies 1–277 (MTLQIIAGKA…KILLENKRAN (277 aa)). Residue 8-15 (GKAGTGKT) participates in ATP binding. Positions 271–590 (LENKRANSDS…VLADMENAKL (320 aa)) constitute a UvrD-like helicase C-terminal domain. [4Fe-4S] cluster-binding residues include cysteine 794, cysteine 1115, cysteine 1118, and cysteine 1124.

Belongs to the helicase family. AddB/RexB type 1 subfamily. In terms of assembly, heterodimer of AddA and AddB. The cofactor is Mg(2+). [4Fe-4S] cluster is required as a cofactor.

In terms of biological role, the heterodimer acts as both an ATP-dependent DNA helicase and an ATP-dependent, dual-direction single-stranded exonuclease. Recognizes the chi site generating a DNA molecule suitable for the initiation of homologous recombination. The AddB subunit has 5' -&gt; 3' nuclease activity but not helicase activity. The chain is ATP-dependent helicase/deoxyribonuclease subunit B from Listeria innocua serovar 6a (strain ATCC BAA-680 / CLIP 11262).